Reading from the N-terminus, the 716-residue chain is Fatty acid oxidation complex subunit alpha (716 aa).

The interval 1-189 (MIYQSPTIQV…KVGAVDAVVA (189 aa)) is enoyl-CoA hydratase/isomerase. Asp296 contributes to the substrate binding site. Residues 311–716 (KAVNSAAVLG…AANNGSYYQA (406 aa)) form a 3-hydroxyacyl-CoA dehydrogenase region. NAD(+)-binding positions include Met324, Asp343, 400–402 (VVE), Lys407, and Ser429. Catalysis depends on His450, which acts as the For 3-hydroxyacyl-CoA dehydrogenase activity. Asn453 serves as a coordination point for NAD(+). 2 residues coordinate substrate: Asn500 and Tyr660.

In the N-terminal section; belongs to the enoyl-CoA hydratase/isomerase family. It in the C-terminal section; belongs to the 3-hydroxyacyl-CoA dehydrogenase family. Heterotetramer of two alpha chains (FadB) and two beta chains (FadA).

The enzyme catalyses a (3S)-3-hydroxyacyl-CoA + NAD(+) = a 3-oxoacyl-CoA + NADH + H(+). It carries out the reaction a (3S)-3-hydroxyacyl-CoA = a (2E)-enoyl-CoA + H2O. It catalyses the reaction a 4-saturated-(3S)-3-hydroxyacyl-CoA = a (3E)-enoyl-CoA + H2O. The catalysed reaction is (3S)-3-hydroxybutanoyl-CoA = (3R)-3-hydroxybutanoyl-CoA. The enzyme catalyses a (3Z)-enoyl-CoA = a 4-saturated (2E)-enoyl-CoA. It carries out the reaction a (3E)-enoyl-CoA = a 4-saturated (2E)-enoyl-CoA. The protein operates within lipid metabolism; fatty acid beta-oxidation. Functionally, involved in the aerobic and anaerobic degradation of long-chain fatty acids via beta-oxidation cycle. Catalyzes the formation of 3-oxoacyl-CoA from enoyl-CoA via L-3-hydroxyacyl-CoA. It can also use D-3-hydroxyacyl-CoA and cis-3-enoyl-CoA as substrate. The chain is Fatty acid oxidation complex subunit alpha from Shewanella oneidensis (strain ATCC 700550 / JCM 31522 / CIP 106686 / LMG 19005 / NCIMB 14063 / MR-1).